We begin with the raw amino-acid sequence, 862 residues long: Cytosolic carboxypeptidase 2 (862 aa).

One can recognise a Peptidase M14 domain in the interval 359-629; the sequence is YPYTYTDLQC…HVCDTLLDFC (271 aa). The Zn(2+) site is built by H425, E428, and H521. The Proton donor/acceptor role is filled by E593. 3 disordered regions span residues 669–692, 704–728, and 750–836; these read SDIPLSDIESSTSGSDSSLSDGPP, NQKTVLKNPKKKRLQTRKQRNEQYQ, and STLQ…PNWS. The segment covering 674–689 has biased composition (low complexity); it reads SDIESSTSGSDSSLSD. The segment covering 711-721 has biased composition (basic residues); sequence NPKKKRLQTRK. Residues 813 to 825 show a composition bias toward polar residues; that stretch reads ASCSPKRSTNSSL.

Belongs to the peptidase M14 family. As to quaternary structure, interacts with RARRES1, KIF11 and MAPRE1. It depends on Zn(2+) as a cofactor. Widely expressed. Expressed in tissues with motile cilia such as testis, lung and trachea. Also detected in brain, eye, muscle, pancreas, intestine, stomach, pituitary, spleen, adrenal and kidney. Expressed in mitral and granular cells in brain.

Its subcellular location is the cytoplasm. It localises to the cytosol. The protein localises to the cytoskeleton. It is found in the microtubule organizing center. The protein resides in the centrosome. Its subcellular location is the centriole. It localises to the cilium basal body. It catalyses the reaction (L-glutamyl)(n+1)-gamma-L-glutamyl-L-glutamyl-[protein] + H2O = (L-glutamyl)(n)-gamma-L-glutamyl-L-glutamyl-[protein] + L-glutamate. Its activity is regulated as follows. Inhibited by RARRES1. In terms of biological role, metallocarboxypeptidase that mediates deglutamylation of tubulin and non-tubulin target proteins. Catalyzes the removal of polyglutamate side chains present on the gamma-carboxyl group of glutamate residues within the C-terminal tail of tubulin protein. Specifically cleaves tubulin long-side-chains, while it is not able to remove the branching point glutamate. Also catalyzes the removal of polyglutamate residues from the carboxy-terminus of non-tubulin proteins such as MYLK. This chain is Cytosolic carboxypeptidase 2, found in Mus musculus (Mouse).